We begin with the raw amino-acid sequence, 201 residues long: ADP-ribosylation factor-related protein 1 (201 aa).

The residue at position 1 (M1) is an N-acetylmethionine. GTP is bound by residues 24–31 (GLDNAGKT), 75–79 (DLGGQ), and 134–137 (NKQD).

The protein belongs to the small GTPase superfamily. Arf family. Interacts with SYS1.

The protein localises to the golgi apparatus. It localises to the trans-Golgi network. Trans-Golgi-associated GTPase that regulates protein sorting. Controls the targeting of ARL1 and its effector to the trans-Golgi. Required for the lipidation of chylomicrons in the intestine and required for VLDL lipidation in the liver. This chain is ADP-ribosylation factor-related protein 1 (ARFRP1), found in Pongo abelii (Sumatran orangutan).